Consider the following 521-residue polypeptide: Vascular endothelial zinc finger 1 (521 aa).

The C2H2-type 1 zinc finger occupies 74 to 96 (FVCTYCSKAFRDSYHLRRHESCH). Low complexity predominate over residues 140-155 (TTSSSGTNPSSSASTT). The tract at residues 140–167 (TTSSSGTNPSSSASTTAMPVTQSVKKPS) is disordered. C2H2-type zinc fingers lie at residues 174 to 196 (HACEMCGKAFRDVYHLNRHKLSH), 202 to 224 (FECPICNQRFKRKDRMTYHVRSH), 232 to 255 (YTCSVCGKGFSRPDHLSCHVKHVH), 261 to 283 (FKCQTCTAAFATKDRLRTHMVRH), and 287 to 308 (VSCNICGKLLSAAYITSHLKTH). N6-acetyllysine is present on Lys362. Tandem repeats lie at residues 394–400 (PVTLTTP), 445–451 (PVTITSP), 457–463 (PLTLTTP), and 479–485 (PVTITSP). The segment at 394–485 (PVTLTTPFSI…IAHPVTITSP (92 aa)) is 4 X 7 AA repeats of P-[LV]-T-[IL]-T-[ST]-P.

This sequence belongs to the krueppel C2H2-type zinc-finger protein family. Interacts with ARHGAP22. Ubiquitously expressed. Highest levels in skeletal muscle and kidney.

It localises to the nucleus. Functionally, possible transcription factor. Specifically binds to the CT/GC-rich region of the interleukin-3 promoter and mediates tax transactivation of IL-3. In Homo sapiens (Human), this protein is Vascular endothelial zinc finger 1 (VEZF1).